The chain runs to 570 residues: Protein NRT1/ PTR FAMILY 8.1 (570 aa).

T98 carries the phosphothreonine modification. Transmembrane regions (helical) follow at residues 99–119 (IATF…SASV), 140–160 (AVFF…KPCV), 182–202 (FFNW…TVLV), 210–230 (WGWG…FFFF), 329–349 (IITL…YSQM), 377–397 (LFDT…IIPL), 414–434 (MGIG…LEVV), 454–474 (IFWQ…TFIG), 494–514 (LSLT…TVVM), and 537–557 (YFFY…LWIS).

Belongs to the major facilitator superfamily. Proton-dependent oligopeptide transporter (POT/PTR) (TC 2.A.17) family. Expressed in cotyledons, hypocotyls, leaves, roots, flowers, pistils and vascular tissue of sepals, anthers, carpels and funiculi. Not detected in seeds.

The protein resides in the cell membrane. Its function is as follows. Peptide transporter. Mediates the transport of di- and tripeptides. High affinity transporter with low selectivity. No transport of amino acids. In Arabidopsis thaliana (Mouse-ear cress), this protein is Protein NRT1/ PTR FAMILY 8.1 (NPF8.1).